The primary structure comprises 439 residues: Kinesin-like protein KIN-13 (439 aa).

Residue 1-5 participates in ATP binding; that stretch reads GSGKS. The Kinesin motor domain maps to 1–240; sequence GSGKSFTMMH…LRYADRVKEL (240 aa).

The protein belongs to the TRAFAC class myosin-kinesin ATPase superfamily. Kinesin family. KIN-13 subfamily. As to quaternary structure, interacts with PLK. Phosphorylated by PLK.

Its subcellular location is the cytoplasm. The protein resides in the cytoskeleton. It is found in the cell projection. It localises to the cilium. The protein localises to the flagellum. Its subcellular location is the flagellum basal body. The protein resides in the flagellum axoneme. It is found in the spindle. It localises to the chromosome. The protein localises to the centromere. Its subcellular location is the kinetochore. In terms of biological role, involved in cell cycle. Involved in formation of flagella, regulation of flagellar length, and formation of median bodies during interphase. Regulates flagellar length in all eight distal flagellar tips by promoting disassembly of the microtubules. Disassembles microtubules at the distal flagellar tips in a length-dependent manner in order to maintain different equilibrium lengths of the four flagellar pairs. Regulates interphase and mitotic microtubule dynamics. Regulates microtubule disassembly dynamics of the dual mitotic spindles and the median body. This Giardia intestinalis (Giardia lamblia) protein is Kinesin-like protein KIN-13.